A 279-amino-acid polypeptide reads, in one-letter code: Phosphate import ATP-binding protein PstB (279 aa).

Residues 33–274 (LDINKLNLFY…PLKKKTEDYI (242 aa)) form the ABC transporter domain. 65–72 (GPSGCGKS) provides a ligand contact to ATP.

This sequence belongs to the ABC transporter superfamily. Phosphate importer (TC 3.A.1.7) family. In terms of assembly, the complex is composed of two ATP-binding proteins (PstB), two transmembrane proteins (PstC and PstA) and a solute-binding protein (PstS).

The protein localises to the cell inner membrane. It catalyses the reaction phosphate(out) + ATP + H2O = ADP + 2 phosphate(in) + H(+). Functionally, part of the ABC transporter complex PstSACB involved in phosphate import. Responsible for energy coupling to the transport system. The polypeptide is Phosphate import ATP-binding protein PstB (Colwellia psychrerythraea (strain 34H / ATCC BAA-681) (Vibrio psychroerythus)).